Consider the following 88-residue polypeptide: Small ribosomal subunit protein uS15 (88 aa).

It belongs to the universal ribosomal protein uS15 family. Part of the 30S ribosomal subunit. Forms a bridge to the 50S subunit in the 70S ribosome, contacting the 23S rRNA.

In terms of biological role, one of the primary rRNA binding proteins, it binds directly to 16S rRNA where it helps nucleate assembly of the platform of the 30S subunit by binding and bridging several RNA helices of the 16S rRNA. Forms an intersubunit bridge (bridge B4) with the 23S rRNA of the 50S subunit in the ribosome. In Verminephrobacter eiseniae (strain EF01-2), this protein is Small ribosomal subunit protein uS15.